A 520-amino-acid chain; its full sequence is Succinyl-CoA:3-ketoacid coenzyme A transferase 2A, mitochondrial (520 aa).

Residues 1-39 (MAALRLLAWAFSRRVSAHRPQPTLPHHLIRHYPTTRCGK) constitute a mitochondrion transit peptide. The interval 280 to 299 (ERLTTRDSPPAPGSKDQDPK) is disordered. The 5-glutamyl coenzyme A thioester intermediate role is filled by Glu342.

Belongs to the 3-oxoacid CoA-transferase family. Homodimer. Expressed in flagella of epididymal sperm.

It localises to the mitochondrion. It catalyses the reaction a 3-oxo acid + succinyl-CoA = a 3-oxoacyl-CoA + succinate. The protein operates within ketone metabolism; succinyl-CoA degradation; acetoacetyl-CoA from succinyl-CoA: step 1/1. Key enzyme for ketone body catabolism. Transfers the CoA moiety from succinate to acetoacetate. Formation of the enzyme-CoA intermediate proceeds via an unstable anhydride species formed between the carboxylate groups of the enzyme and substrate. Probably play and important roles in the energy metabolism of spermatozoa. In Rattus norvegicus (Rat), this protein is Succinyl-CoA:3-ketoacid coenzyme A transferase 2A, mitochondrial (Oxct2a).